Reading from the N-terminus, the 476-residue chain is NAD(+) hydrolase ThsA (476 aa).

In terms of domain architecture, Deacetylase sirtuin-type spans 4–283; that stretch reads NPIVELFIKD…QRIENNIKTK (280 aa). NAD(+)-binding residues include Ala23, Asp114, and His152. Residue His152 is the Proton acceptor of the active site. The interval 284-476 is SLOG (STALD) domain, binds 3'cADPR; it reads TVFLSGSAVE…IIEFVEILSN (193 aa). The 3'cADPR site is built by Gly289, Ser290, Leu326, Phe357, Arg371, Lys388, Gly399, and Glu403.

It belongs to the soluble Thoeris ThsA family. Homotetramer formed by dimer of dimers; homooctamers are occasionally seen. Not seen to interact with ThsB. In the absence of the signal generated by ThsB, 63% monomer and 20% homotetramer; in the presence of the ThsB signal product 40% of the protein is dimeric. Homotetramer in solution; probably dimerizes via the N-terminal sirtuin-like domain.

Its subcellular location is the cytoplasm. It catalyses the reaction NAD(+) + H2O = ADP-D-ribose + nicotinamide + H(+). Activated by a molecule generated by endogenous ThsB (AC J8G8J6) or ThsB' (AC J8CSK2); activation in vitro is 50-100x more sensitive to 3' cyclic ADP-D-ribose (3'cADPR) than 2'cADPR. 3'cADPR activates the NADase function of ThsA by binding to the SLOG domain, which changes its tetramer organization, allowing NAD to access the active site. Also activated by a signal molecule generated by B.dafuensis TIR1 (AC A0A5B8Z670) and TIR2 (AC A0A5B8Z260), and by BdTIR (AC I1GTC2), a plant protein involved in defense against bacterial infection. The signal produced by BdTIR is probably 2'cADPR, which activates this protein, the signal produced by endogenous ThsB' is probably 3'cADPR. NAD(+) hydrolyzing component (NADase) of the Thoeris antiviral defense system, composed of ThsA and ThsB. Activated by a signal molecule generated by endogenous ThsB (AC J8G8J6) or ThsB' (AC J8CSK2, probably 3'cADPR), by TIR1 and TIR2 from B.dafuensis or by BdTIR from B.distachyon (AC I1GTC2, probably 2'cADPR). Upon activation binds and hydrolyzes NAD(+), leading to cell death and inhibition of phage replication. Not seen to bind DNA. Activation is 50-100x more sensitive to 3' cyclic ADP-D-ribose (3'cADPR) than 2'cADPR. In another paper ThsA is not activated by any tested cADPR isomer, although it binds 3'cADPR; it was suggested the protein is already in a fully active state. Expression of ThsA and ThsB in B.subtilis (strain BEST7003) confers resistance to phages phi29, SBSphiC, SBSphiJ and SPO1. At multiplicity of infection (MOI) of 0.05 Thoeris-encoding cultures grow normally when infected with SPO1, at MOI 5 cultures collapse prematurely by 90 minutes post-infection, thus the phage are not able to complete a replication cycle. NAD(+) levels fall and ADP-D-ribose levels rise 60 minutes post-infection. Thoeris cultures eventually recover, but retain the same susceptibility to SPO1. This is NAD(+) hydrolase ThsA from Bacillus cereus (strain MSX-D12).